The chain runs to 690 residues: Elongation factor G (690 aa).

The tr-type G domain occupies 8-283 (EDYRNFGIMA…AVVDYLPSPL (276 aa)). GTP-binding positions include 17–24 (AHIDAGKT), 81–85 (DTPGH), and 135–138 (NKMD).

Belongs to the TRAFAC class translation factor GTPase superfamily. Classic translation factor GTPase family. EF-G/EF-2 subfamily.

The protein localises to the cytoplasm. Its function is as follows. Catalyzes the GTP-dependent ribosomal translocation step during translation elongation. During this step, the ribosome changes from the pre-translocational (PRE) to the post-translocational (POST) state as the newly formed A-site-bound peptidyl-tRNA and P-site-bound deacylated tRNA move to the P and E sites, respectively. Catalyzes the coordinated movement of the two tRNA molecules, the mRNA and conformational changes in the ribosome. The sequence is that of Elongation factor G from Rhodopseudomonas palustris (strain ATCC BAA-98 / CGA009).